The chain runs to 556 residues: Formate--tetrahydrofolate ligase 1 (556 aa).

Position 65–72 (65–72 (TPAGEGKS)) interacts with ATP.

The protein belongs to the formate--tetrahydrofolate ligase family.

It carries out the reaction (6S)-5,6,7,8-tetrahydrofolate + formate + ATP = (6R)-10-formyltetrahydrofolate + ADP + phosphate. It functions in the pathway one-carbon metabolism; tetrahydrofolate interconversion. This chain is Formate--tetrahydrofolate ligase 1, found in Streptococcus pyogenes serotype M18 (strain MGAS8232).